Consider the following 686-residue polypeptide: MTDITPVQNDVDVNGNNVNDDVSSNLKRPIDQGDPSNGLAEEENPANNQLHLKKARLDGDALTSSPAGLAENGIEGATLAANGENGYNATGSGAEDEQQGLKKEEGGQGTKQEDLDENSKQELPMEVPKEPAPAPPPEPDMNNLPQNPIPKHQQKHALLAIKAVKRLKDARPFLQPVDPVKLDIPFYFNYIKRPMDLSTIERKLNVGAYEVPEQITEDFNLMVNNSIKFNGPNAGISQMARNIQASFEKHMLNMPAKDAPPVIAKGRRSSAQEDAPIVIRRAQTHNGRPKRTIHPPKSKDIYPYESKKPKSKRLQQAMKFCQSVLKELMAKKHASYNYPFLEPVDPVSMNLPTYFDYVKEPMDLGTIAKKLNDWQYQTMEDFERDVRLVFKNCYTFNPDGTIVNMMGHRLEEVFNSKWADRPNLDDYDSDEDSRTQGDYDDYESEYSESDIDETIITNPAIQYLEEQLARMKVELQQLKKQELEKIRKERRLARGSKKRGKRSKGRSGSKNASSKGRRDKKNKLKTVVTYDMKRIITERINDLPTSKLERAIDIIKKSMPNISEDDEVELDLDTLDNHTILTLYNTFFRQYESSSGASNGLDGTSGVTRDASSLSPTSAGSRKRRSKALSQEEQSRQIEKIKNKLAILDSASPLSQNGSPGQIQSAAHNGFSSSSDDDVSSESEEE.

Disordered regions lie at residues 1-69 and 85-150; these read MTDI…PAGL and NGYN…NPIP. Positions 9 to 25 are enriched in low complexity; sequence NDVDVNGNNVNDDVSSN. Residues 99–120 are compositionally biased toward basic and acidic residues; it reads QGLKKEEGGQGTKQEDLDENSK. Pro residues predominate over residues 130–139; sequence EPAPAPPPEP. Residues 145-254 enclose the Bromo 1 domain; that stretch reads PQNPIPKHQQ…ASFEKHMLNM (110 aa). Ser270 carries the post-translational modification Phosphoserine. A disordered region spans residues 283 to 304; the sequence is QTHNGRPKRTIHPPKSKDIYPY. Residues 287–296 show a composition bias toward basic residues; sequence GRPKRTIHPP. Residues 312–421 enclose the Bromo 2 domain; sequence KRLQQAMKFC…EVFNSKWADR (110 aa). Disordered stretches follow at residues 424-447, 486-523, 594-636, and 649-686; these read LDDYDSDEDSRTQGDYDDYESEYS, IRKERRLARGSKKRGKRSKGRSGSKNASSKGRRDKKNK, SSGA…EQSR, and DSASPLSQNGSPGQIQSAAHNGFSSSSDDDVSSESEEE. Ser429 carries the post-translational modification Phosphoserine. A compositionally biased stretch (acidic residues) spans 438–447; that stretch reads DYDDYESEYS. A coiled-coil region spans residues 460–499; that stretch reads AIQYLEEQLARMKVELQQLKKQELEKIRKERRLARGSKKR. Residues 488 to 507 are compositionally biased toward basic residues; the sequence is KERRLARGSKKRGKRSKGRS. Positions 518 to 598 constitute an NET domain; sequence RDKKNKLKTV…RQYESSSGAS (81 aa). Polar residues-rich tracts occupy residues 594–620 and 652–671; these read SSGASNGLDGTSGVTRDASSLSPTSAG and SPLSQNGSPGQIQSAAHNGF. Ser615 and Ser659 each carry phosphoserine. Residues 675 to 686 are compositionally biased toward acidic residues; the sequence is SDDDVSSESEEE.

This sequence belongs to the BET family. In terms of assembly, interacts with the TFIID subunit TAF7 and with acetylated histones H3 and H4. In terms of processing, phosphorylated by the casein kinase CK2 complex.

It localises to the nucleus. Functionally, transcription factor involved in the expression of a broad class of genes including snRNAs. Required for sporulation and DNA-damage repair. Prevents the spreading of SIR silencing at telomeres and protects histone H4, but not H3, from deacetylation. This chain is Bromodomain-containing factor 1 (BDF1), found in Saccharomyces cerevisiae (strain ATCC 204508 / S288c) (Baker's yeast).